Consider the following 143-residue polypeptide: Glutaredoxin-2 (143 aa).

The N-terminal 30 residues, 1–30 (METNFSFDSNLIVIIIITLFATRIIAKRFL), are a transit peptide targeting the mitochondrion. A Phosphoserine modification is found at Ser-37. The Glutaredoxin domain occupies 41 to 143 (VAHVKDLIGQ…LAEILKPVFQ (103 aa)). Position 58–63 (58–63 (KTYCPY)) interacts with glutathione. Cys-61 carries the S-glutathionyl cysteine; alternate modification. A disulfide bridge connects residues Cys-61 and Cys-64. Residue Ser-91 is modified to Phosphoserine. Glutathione-binding positions include Val-109 and 122 to 123 (NS).

The protein belongs to the glutaredoxin family.

It localises to the cytoplasm. It is found in the mitochondrion. It catalyses the reaction 2 glutathione + H2O2 = glutathione disulfide + 2 H2O. It carries out the reaction 1-chloro-2,4-dinitrobenzene + glutathione = 2,4-dinitrophenyl-S-glutathione + chloride + H(+). The catalysed reaction is RX + glutathione = an S-substituted glutathione + a halide anion + H(+). Component of the glutathione system which performs several activities such as glutathione-dependent oxidoreductase, glutathione peroxidase and glutathione S-transferase (GST) activity. The disulfide bond functions as an electron carrier in the glutathione-dependent synthesis of deoxyribonucleotides by the enzyme ribonucleotide reductase. In addition, it is also involved in reducing cytosolic protein- and non-protein-disulfides in a coupled system with glutathione reductase. Required for resistance to reactive oxygen species (ROS) by directly reducing hydroperoxides and for the detoxification of ROS-mediated damage. GRX2 is more active as an oxidoreductase than GRX1. Responsible for the S-glutathionylation of DHBP synthase. The protein is Glutaredoxin-2 (GRX2) of Saccharomyces cerevisiae (strain ATCC 204508 / S288c) (Baker's yeast).